A 312-amino-acid polypeptide reads, in one-letter code: MSDSFCPDCKKHTEVAFDHSAGDTVCTECGLVLEAHSVDETSEWRTFANESSDNDPVRVGGPTNPLLTDGGLSTVIAKPNGAQGEFLSSSLGRWQNRGSNPDRSLILAFRTIANMADRLGLVATIKDRANEIYKKVEDLKSIRGRNQDAILAACLYIACRQEDRPRTVKEICSVANGATKKEIGRAKEFIVKQLEVEMGQSMEMGTIHAGDFLRRFCSTLGMNNQAVKAAQEAVQRSEELDIRRSPISIAAAVIYMITQLSDDKKPLKDISLATGVAEGTIRNSYKDLYPYASRLIPNTYAKEEDLKNLCTP.

A TFIIB-type zinc finger spans residues 2–34; the sequence is SDSFCPDCKKHTEVAFDHSAGDTVCTECGLVLE. Residues Cys-6, Cys-9, Cys-26, and Cys-29 each contribute to the Zn(2+) site. A run of 2 repeats spans residues 115–192 and 216–290.

This sequence belongs to the TFIIB family. In terms of assembly, associates with TFIID-IIA (DA complex) to form TFIID-IIA-IIB (DAB-complex) which is then recognized by polymerase II. Interacts with TBP2.

Its subcellular location is the nucleus. General factor that plays a major role in the activation of eukaryotic genes transcribed by RNA polymerase II. The sequence is that of Transcription initiation factor IIB (TFIIB) from Oryza sativa subsp. japonica (Rice).